We begin with the raw amino-acid sequence, 97 residues long: NADH-quinone oxidoreductase subunit K (97 aa).

The next 3 membrane-spanning stretches (helical) occupy residues 1–21 (MSEY…GVLY), 25–45 (ILVM…LMVY), and 57–77 (VFVF…LAIL).

It belongs to the complex I subunit 4L family. As to quaternary structure, NDH-1 is composed of 14 different subunits. Subunits NuoA, H, J, K, L, M, N constitute the membrane sector of the complex.

Its subcellular location is the cell inner membrane. The catalysed reaction is a quinone + NADH + 5 H(+)(in) = a quinol + NAD(+) + 4 H(+)(out). Its function is as follows. NDH-1 shuttles electrons from NADH, via FMN and iron-sulfur (Fe-S) centers, to quinones in the respiratory chain. The immediate electron acceptor for the enzyme in this species is believed to be a menaquinone. Couples the redox reaction to proton translocation (for every two electrons transferred, four hydrogen ions are translocated across the cytoplasmic membrane), and thus conserves the redox energy in a proton gradient. This Cytophaga hutchinsonii (strain ATCC 33406 / DSM 1761 / CIP 103989 / NBRC 15051 / NCIMB 9469 / D465) protein is NADH-quinone oxidoreductase subunit K.